Consider the following 139-residue polypeptide: Actin-depolymerizing factor 4 (139 aa).

The ADF-H domain occupies 5–139; sequence SSGVAIHDDC…SLDALKDRVK (135 aa).

The protein belongs to the actin-binding proteins ADF family. In terms of assembly, interacts with LECRK1 (via kinase domain).

Its subcellular location is the cytoplasm. It is found in the cytoskeleton. Actin-depolymerizing protein. Severs actin filaments (F-actin) and binds to actin monomers. Involved in innate immunity. Required for the expression of defense-related genes PR1A, LOX2 and CHS1 upon biotic stresses. Required for basal resistance to the fungal blast (Magnaporthe grisea), bacterial blight (Xanthomonas oryzae pv. oryzae, Xoo) and the herbivorous insect brown planthopper (Nilaparvata lugens, BPH). Involved in the promotion of seed germination. Required for the expression of alpha-amylase genes during seed germination. In Oryza sativa subsp. japonica (Rice), this protein is Actin-depolymerizing factor 4 (ADF4).